The sequence spans 733 residues: Phosphoribosylformylglycinamidine synthase subunit PurL (733 aa).

His42 is a catalytic residue. The ATP site is built by Tyr45 and Lys84. Glu86 contacts Mg(2+). Residues 87–90 (SHNH) and Arg109 each bind substrate. The Proton acceptor role is filled by His88. A Mg(2+)-binding site is contributed by Asp110. Substrate is bound at residue Gln233. Position 261 (Asp261) interacts with Mg(2+). 305–307 (ESQ) lines the substrate pocket. The ATP site is built by Asp489 and Gly526. Mg(2+) is bound at residue Asn527. Residue Ser529 coordinates substrate.

This sequence belongs to the FGAMS family. As to quaternary structure, monomer. Part of the FGAM synthase complex composed of 1 PurL, 1 PurQ and 2 PurS subunits.

The protein resides in the cytoplasm. The enzyme catalyses N(2)-formyl-N(1)-(5-phospho-beta-D-ribosyl)glycinamide + L-glutamine + ATP + H2O = 2-formamido-N(1)-(5-O-phospho-beta-D-ribosyl)acetamidine + L-glutamate + ADP + phosphate + H(+). Its pathway is purine metabolism; IMP biosynthesis via de novo pathway; 5-amino-1-(5-phospho-D-ribosyl)imidazole from N(2)-formyl-N(1)-(5-phospho-D-ribosyl)glycinamide: step 1/2. In terms of biological role, part of the phosphoribosylformylglycinamidine synthase complex involved in the purines biosynthetic pathway. Catalyzes the ATP-dependent conversion of formylglycinamide ribonucleotide (FGAR) and glutamine to yield formylglycinamidine ribonucleotide (FGAM) and glutamate. The FGAM synthase complex is composed of three subunits. PurQ produces an ammonia molecule by converting glutamine to glutamate. PurL transfers the ammonia molecule to FGAR to form FGAM in an ATP-dependent manner. PurS interacts with PurQ and PurL and is thought to assist in the transfer of the ammonia molecule from PurQ to PurL. This chain is Phosphoribosylformylglycinamidine synthase subunit PurL, found in Moorella thermoacetica (strain ATCC 39073 / JCM 9320).